The chain runs to 343 residues: Zinc finger CCCH domain-containing protein 1 (343 aa).

The interval M1–S102 is disordered. The segment covering P7–Q25 has biased composition (low complexity). Over residues K35–K44 the composition is skewed to basic residues. Residues S79–G91 are compositionally biased toward low complexity. The segment at D200 to G228 adopts a C3H1-type zinc-finger fold. Residues R249–E268 form a disordered region. The span at V255–E268 shows a compositional bias: acidic residues. The RING-type zinc finger occupies C277–N315.

This Arabidopsis thaliana (Mouse-ear cress) protein is Zinc finger CCCH domain-containing protein 1.